The following is a 183-amino-acid chain: Ribosome rescue factor SmrB (183 aa).

A Smr domain is found at 98–173; sequence LDLHGLTQLQ…GDAALLVLIE (76 aa).

This sequence belongs to the SmrB family. As to quaternary structure, associates with collided ribosomes, but not with correctly translating polysomes.

Its function is as follows. Acts as a ribosome collision sensor. Detects stalled/collided disomes (pairs of ribosomes where the leading ribosome is stalled and a second ribosome has collided with it) and endonucleolytically cleaves mRNA at the 5' boundary of the stalled ribosome. Stalled/collided disomes form a new interface (primarily via the 30S subunits) that binds SmrB. Cleaved mRNA becomes available for tmRNA ligation, leading to ribosomal subunit dissociation and rescue of stalled ribosomes. The polypeptide is Ribosome rescue factor SmrB (Escherichia coli O7:K1 (strain IAI39 / ExPEC)).